The following is a 451-amino-acid chain: Molybdate-anion transporter (451 aa).

The next 12 helical transmembrane spans lie at Met-1 to Phe-21, Tyr-45 to Leu-65, Ile-79 to Pro-99, Phe-130 to Phe-150, Asn-180 to Leu-200, Gly-201 to Ile-221, Val-251 to Leu-271, Ala-281 to Tyr-301, Val-316 to Ala-336, Leu-346 to Leu-366, Gly-378 to Leu-398, and Met-410 to Thr-430.

Belongs to the major facilitator superfamily.

It is found in the cell membrane. Mediates high-affinity intracellular uptake of the rare oligo-element molybdenum. The polypeptide is Molybdate-anion transporter (mfsd5) (Xenopus laevis (African clawed frog)).